Reading from the N-terminus, the 162-residue chain is Interleukin-15 (162 aa).

The signal sequence occupies residues 1 to 29 (MRISKPHLRITSIQCYVCLLLNTHFLTEA). A propeptide spanning residues 30–48 (GIRVFILGCISAGIPKTEA) is cleaved from the precursor. 2 disulfide bridges follow: C83–C133 and C90–C136. N-linked (GlcNAc...) asparagine glycans are attached at residues N119, N127, and N143.

The protein belongs to the IL-15/IL-21 family.

It localises to the secreted. Cytokine that plays a major role in the development of inflammatory and protective immune responses to microbial invaders and parasites by modulating immune cells of both the innate and adaptive immune systems. Stimulates the proliferation of natural killer cells, T-cells and B-cells and promotes the secretion of several cytokines. In monocytes, induces the production of IL8 and monocyte chemotactic protein 1/CCL2, two chemokines that attract neutrophils and monocytes respectively to sites of infection. Unlike most cytokines, which are secreted in soluble form, IL15 is expressed in association with its high affinity IL15RA on the surface of IL15-producing cells and delivers signals to target cells that express IL2RB and IL2RG receptor subunits. Binding to its receptor triggers the phosphorylation of JAK1 and JAK3 and the recruitment and subsequent phosphorylation of signal transducer and activator of transcription-3/STAT3 and STAT5. In mast cells, induces the rapid tyrosine phosphorylation of STAT6 and thereby controls mast cell survival and release of cytokines such as IL4. The polypeptide is Interleukin-15 (IL15) (Marmota monax (Woodchuck)).